Reading from the N-terminus, the 284-residue chain is NAD kinase (284 aa).

Asp-67 serves as the catalytic Proton acceptor. Residues 67-68, 141-142, Arg-152, Lys-169, Asp-171, 182-187, and Gln-241 each bind NAD(+); these read DG, ND, and TGYSLS.

This sequence belongs to the NAD kinase family. It depends on a divalent metal cation as a cofactor.

The protein resides in the cytoplasm. It carries out the reaction NAD(+) + ATP = ADP + NADP(+) + H(+). Functionally, involved in the regulation of the intracellular balance of NAD and NADP, and is a key enzyme in the biosynthesis of NADP. Catalyzes specifically the phosphorylation on 2'-hydroxyl of the adenosine moiety of NAD to yield NADP. This chain is NAD kinase, found in Geobacter sulfurreducens (strain ATCC 51573 / DSM 12127 / PCA).